The following is a 179-amino-acid chain: MRNRRNIFLIGPMGAGKTTVGRLLARALGMEFWDSDKEIERRTGVTVPMIFEYEGEAGFRRRESEVIADLTGKERIVLATGGGSVLAAENREHLAARGLVIYLQCSVQKQLERTHKDMNRPLLQTENPRQRLEELLRVRDPIYRELADYVVDTGQHSSRSAVRRIINAYEKSGTRLRTE.

14–19 (GAGKTT) is an ATP binding site. A Mg(2+)-binding site is contributed by T18. Substrate is bound by residues D36, R60, and G82. An ATP-binding site is contributed by R120. R139 lines the substrate pocket.

The protein belongs to the shikimate kinase family. Monomer. Requires Mg(2+) as cofactor.

The protein localises to the cytoplasm. It carries out the reaction shikimate + ATP = 3-phosphoshikimate + ADP + H(+). It functions in the pathway metabolic intermediate biosynthesis; chorismate biosynthesis; chorismate from D-erythrose 4-phosphate and phosphoenolpyruvate: step 5/7. Its function is as follows. Catalyzes the specific phosphorylation of the 3-hydroxyl group of shikimic acid using ATP as a cosubstrate. The chain is Shikimate kinase from Methylococcus capsulatus (strain ATCC 33009 / NCIMB 11132 / Bath).